Reading from the N-terminus, the 221-residue chain is uncharacterized protein (221 aa).

The MOSC domain occupies 33–167; it reads RPAKSAVMLY…VSPGANLELL (135 aa).

This is an uncharacterized protein from Bacillus subtilis (strain 168).